The sequence spans 655 residues: Kelch-like protein 13 (655 aa).

The BTB domain occupies cysteine 92–methionine 161. Positions cysteine 196–glutamine 297 constitute a BACK domain. 6 Kelch repeats span residues histidine 341–asparagine 389, phenylalanine 390–glycine 441, tyrosine 442–glycine 488, methionine 490–glutamate 535, leucine 537–asparagine 587, and lysine 588–valine 636.

Component of the BCR(KLHL9-KLHL13) E3 ubiquitin ligase complex, at least composed of CUL3, KLHL9, KLHL13 and RBX1. Interacts with AURKB.

Its pathway is protein modification; protein ubiquitination. Substrate-specific adapter of a BCR (BTB-CUL3-RBX1) E3 ubiquitin-protein ligase complex required for mitotic progression and cytokinesis. The BCR(KLHL9-KLHL13) E3 ubiquitin ligase complex mediates the ubiquitination of AURKB and controls the dynamic behavior of AURKB on mitotic chromosomes and thereby coordinates faithful mitotic progression and completion of cytokinesis. The polypeptide is Kelch-like protein 13 (KLHL13) (Bos taurus (Bovine)).